A 247-amino-acid polypeptide reads, in one-letter code: tRNA (guanine-N(1)-)-methyltransferase (247 aa).

S-adenosyl-L-methionine contacts are provided by residues glycine 115 and 134–139 (IGDFVL).

Belongs to the RNA methyltransferase TrmD family. Homodimer.

The protein localises to the cytoplasm. It catalyses the reaction guanosine(37) in tRNA + S-adenosyl-L-methionine = N(1)-methylguanosine(37) in tRNA + S-adenosyl-L-homocysteine + H(+). Functionally, specifically methylates guanosine-37 in various tRNAs. The sequence is that of tRNA (guanine-N(1)-)-methyltransferase from Anaeromyxobacter sp. (strain K).